Consider the following 407-residue polypeptide: Na(+)-translocating NADH-quinone reductase subunit F (407 aa).

A helical transmembrane segment spans residues 3–23 (IILGVVMFTLIVLALVLVILF). The 95-residue stretch at 32–126 (GDITISVNGD…DMDIELPEEI (95 aa)) folds into the 2Fe-2S ferredoxin-type domain. Positions 69, 75, 78, and 110 each coordinate [2Fe-2S] cluster. Residues 129-269 (VKKWECTVIS…SGPFGEFFAK (141 aa)) form the FAD-binding FR-type domain. Residues 272–389 (DAEMVFIGGG…PMMNAAVIGM (118 aa)) are catalytic.

Belongs to the NqrF family. Composed of six subunits; NqrA, NqrB, NqrC, NqrD, NqrE and NqrF. [2Fe-2S] cluster serves as cofactor. Requires FAD as cofactor.

The protein localises to the cell inner membrane. It carries out the reaction a ubiquinone + n Na(+)(in) + NADH + H(+) = a ubiquinol + n Na(+)(out) + NAD(+). Functionally, NQR complex catalyzes the reduction of ubiquinone-1 to ubiquinol by two successive reactions, coupled with the transport of Na(+) ions from the cytoplasm to the periplasm. The first step is catalyzed by NqrF, which accepts electrons from NADH and reduces ubiquinone-1 to ubisemiquinone by a one-electron transfer pathway. This is Na(+)-translocating NADH-quinone reductase subunit F from Vibrio parahaemolyticus serotype O3:K6 (strain RIMD 2210633).